Consider the following 158-residue polypeptide: NAD(P)H-quinone oxidoreductase subunit J, chloroplastic (158 aa).

This sequence belongs to the complex I 30 kDa subunit family. As to quaternary structure, NDH is composed of at least 16 different subunits, 5 of which are encoded in the nucleus.

The protein localises to the plastid. Its subcellular location is the chloroplast thylakoid membrane. The catalysed reaction is a plastoquinone + NADH + (n+1) H(+)(in) = a plastoquinol + NAD(+) + n H(+)(out). The enzyme catalyses a plastoquinone + NADPH + (n+1) H(+)(in) = a plastoquinol + NADP(+) + n H(+)(out). Its function is as follows. NDH shuttles electrons from NAD(P)H:plastoquinone, via FMN and iron-sulfur (Fe-S) centers, to quinones in the photosynthetic chain and possibly in a chloroplast respiratory chain. The immediate electron acceptor for the enzyme in this species is believed to be plastoquinone. Couples the redox reaction to proton translocation, and thus conserves the redox energy in a proton gradient. This Lemna minor (Common duckweed) protein is NAD(P)H-quinone oxidoreductase subunit J, chloroplastic.